A 164-amino-acid chain; its full sequence is Peptide deformylase-like (164 aa).

Glu-134 is a catalytic residue.

The protein belongs to the polypeptide deformylase family.

The protein is Peptide deformylase-like of Brucella melitensis biotype 1 (strain ATCC 23456 / CCUG 17765 / NCTC 10094 / 16M).